We begin with the raw amino-acid sequence, 415 residues long: S-inosyl-L-homocysteine hydrolase (415 aa).

Residues D123 and E148 each coordinate substrate. 149-151 contributes to the NAD(+) binding site; it reads TTT. Residues K178 and D182 each coordinate substrate. NAD(+) contacts are provided by residues N183, 212–217, E235, 291–293, and N337; these read GYGWCG and AGH.

This sequence belongs to the adenosylhomocysteinase family. In terms of assembly, exists both as a homotetramer and a homodimer, in a 4:1 ratio. NAD(+) serves as cofactor.

It is found in the cytoplasm. The catalysed reaction is S-inosyl-L-homocysteine + H2O = L-homocysteine + inosine. Its pathway is amino-acid biosynthesis; S-adenosyl-L-methionine biosynthesis. Functionally, catalyzes the hydrolysis of S-inosyl-L-homocysteine (SIH) to L-homocysteine (Hcy) and inosine. Likely functions in a S-adenosyl-L-methionine (SAM) recycling pathway from S-adenosyl-L-homocysteine (SAH) produced from SAM-dependent methylation reactions. Can also catalyze the reverse reaction in vitro, i.e. the synthesis of SIH from Hcy and inosine. Is specific for SIH and inosine as it is unable to either hydrolyze SAH or synthesize SAH from adenosine and Hcy. This Methanocaldococcus jannaschii (strain ATCC 43067 / DSM 2661 / JAL-1 / JCM 10045 / NBRC 100440) (Methanococcus jannaschii) protein is S-inosyl-L-homocysteine hydrolase.